A 450-amino-acid chain; its full sequence is Na(+)/H(+) antiporter NhaA 1 (450 aa).

The next 11 membrane-spanning stretches (helical) occupy residues serine 35–alanine 55, leucine 79–isoleucine 99, leucine 117–tryptophan 137, isoleucine 143–valine 163, alanine 173–phenylalanine 193, isoleucine 198–tyrosine 218, proline 224–histidine 244, leucine 320–asparagine 340, isoleucine 356–leucine 376, valine 392–leucine 412, and valine 423–leucine 443.

The protein belongs to the NhaA Na(+)/H(+) (TC 2.A.33) antiporter family.

Its subcellular location is the cell inner membrane. The enzyme catalyses Na(+)(in) + 2 H(+)(out) = Na(+)(out) + 2 H(+)(in). In terms of biological role, na(+)/H(+) antiporter that extrudes sodium in exchange for external protons. The sequence is that of Na(+)/H(+) antiporter NhaA 1 from Shewanella denitrificans (strain OS217 / ATCC BAA-1090 / DSM 15013).